We begin with the raw amino-acid sequence, 377 residues long: Bifunctional enzyme IspD/IspF (377 aa).

The 2-C-methyl-D-erythritol 4-phosphate cytidylyltransferase stretch occupies residues 1-221 (MTTAAIIVAA…ERILRQDMDV (221 aa)). Positions 222-377 (RLGNGYDVHR…ALATACLVKP (156 aa)) are 2-C-methyl-D-erythritol 2,4-cyclodiphosphate synthase. Residues Asp228 and His230 each contribute to the a divalent metal cation site. Residues 228–230 (DVH) and 254–255 (HS) each bind 4-CDP-2-C-methyl-D-erythritol 2-phosphate. Residue His262 coordinates a divalent metal cation. Residues 276–278 (DIG), 352–355 (TTSE), Phe359, and Arg362 each bind 4-CDP-2-C-methyl-D-erythritol 2-phosphate.

It in the N-terminal section; belongs to the IspD/TarI cytidylyltransferase family. IspD subfamily. This sequence in the C-terminal section; belongs to the IspF family. The cofactor is a divalent metal cation.

It carries out the reaction 2-C-methyl-D-erythritol 4-phosphate + CTP + H(+) = 4-CDP-2-C-methyl-D-erythritol + diphosphate. The enzyme catalyses 4-CDP-2-C-methyl-D-erythritol 2-phosphate = 2-C-methyl-D-erythritol 2,4-cyclic diphosphate + CMP. Its pathway is isoprenoid biosynthesis; isopentenyl diphosphate biosynthesis via DXP pathway; isopentenyl diphosphate from 1-deoxy-D-xylulose 5-phosphate: step 2/6. It functions in the pathway isoprenoid biosynthesis; isopentenyl diphosphate biosynthesis via DXP pathway; isopentenyl diphosphate from 1-deoxy-D-xylulose 5-phosphate: step 4/6. In terms of biological role, bifunctional enzyme that catalyzes the formation of 4-diphosphocytidyl-2-C-methyl-D-erythritol from CTP and 2-C-methyl-D-erythritol 4-phosphate (MEP) (IspD), and catalyzes the conversion of 4-diphosphocytidyl-2-C-methyl-D-erythritol 2-phosphate (CDP-ME2P) to 2-C-methyl-D-erythritol 2,4-cyclodiphosphate (ME-CPP) with a corresponding release of cytidine 5-monophosphate (CMP) (IspF). In Ruegeria pomeroyi (strain ATCC 700808 / DSM 15171 / DSS-3) (Silicibacter pomeroyi), this protein is Bifunctional enzyme IspD/IspF.